The following is a 46-amino-acid chain: U1-plectoxin-Pt1f (46 aa).

Disulfide bonds link Cys-4/Cys-18, Cys-11/Cys-24, Cys-17/Cys-35, Cys-21/Cys-44, and Cys-26/Cys-33.

This sequence belongs to the neurotoxin 02 (plectoxin) family. 02 (plectoxin) subfamily. Expressed by the venom gland.

It is found in the secreted. Potent toxin that may paralyze and/or kill insect pests such as H.virescens (lepidoptera), S.exigua (beet armyworm) and M.sexta (tobacco hornworm). The polypeptide is U1-plectoxin-Pt1f (Plectreurys tristis (Spider)).